Here is a 240-residue protein sequence, read N- to C-terminus: Nuclear receptor-interacting protein 3 (240 aa).

This Mus musculus (Mouse) protein is Nuclear receptor-interacting protein 3 (Nrip3).